A 334-amino-acid polypeptide reads, in one-letter code: Beta-hexosaminidase (334 aa).

Substrate contacts are provided by residues Asp-60, Arg-68, Arg-133, and 163-164 (KH). Residue His-176 is the Proton donor/acceptor of the active site. Catalysis depends on Asp-247, which acts as the Nucleophile.

This sequence belongs to the glycosyl hydrolase 3 family. NagZ subfamily.

The protein localises to the cytoplasm. The enzyme catalyses Hydrolysis of terminal non-reducing N-acetyl-D-hexosamine residues in N-acetyl-beta-D-hexosaminides.. It functions in the pathway cell wall biogenesis; peptidoglycan recycling. Its function is as follows. Plays a role in peptidoglycan recycling by cleaving the terminal beta-1,4-linked N-acetylglucosamine (GlcNAc) from peptide-linked peptidoglycan fragments, giving rise to free GlcNAc, anhydro-N-acetylmuramic acid and anhydro-N-acetylmuramic acid-linked peptides. The chain is Beta-hexosaminidase from Xanthomonas euvesicatoria pv. vesicatoria (strain 85-10) (Xanthomonas campestris pv. vesicatoria).